The following is a 70-amino-acid chain: ATP synthase subunit c (70 aa).

The next 2 membrane-spanning stretches (helical) occupy residues 4-24 and 47-67; these read IAAA…NGLI and FIGI…SFIV.

It belongs to the ATPase C chain family. F-type ATPases have 2 components, F(1) - the catalytic core - and F(0) - the membrane proton channel. F(1) has five subunits: alpha(3), beta(3), gamma(1), delta(1), epsilon(1). F(0) has three main subunits: a(1), b(2) and c(10-14). The alpha and beta chains form an alternating ring which encloses part of the gamma chain. F(1) is attached to F(0) by a central stalk formed by the gamma and epsilon chains, while a peripheral stalk is formed by the delta and b chains.

It localises to the cell membrane. F(1)F(0) ATP synthase produces ATP from ADP in the presence of a proton or sodium gradient. F-type ATPases consist of two structural domains, F(1) containing the extramembraneous catalytic core and F(0) containing the membrane proton channel, linked together by a central stalk and a peripheral stalk. During catalysis, ATP synthesis in the catalytic domain of F(1) is coupled via a rotary mechanism of the central stalk subunits to proton translocation. Its function is as follows. Key component of the F(0) channel; it plays a direct role in translocation across the membrane. A homomeric c-ring of between 10-14 subunits forms the central stalk rotor element with the F(1) delta and epsilon subunits. This is ATP synthase subunit c from Staphylococcus carnosus (strain TM300).